Consider the following 1818-residue polypeptide: Integrin beta-4 (1818 aa).

The first 28 residues, 1-28, serve as a signal peptide directing secretion; that stretch reads MAGPCCSPWVKLLLLAAMLSASLPGDLA. Over 29–712 the chain is Extracellular; it reads NRCKKAQVKS…HKKKDCPPGS (684 aa). The PSI domain occupies 30–74; it reads RCKKAQVKSCTECIRVDKSCAYCTDELFKERRCNTQAELLAAGCR. 8 disulfides stabilise this stretch: C31/C49, C39/C457, C42/C62, C52/C73, C246/C289, C459/C478, C470/C481, and C483/C492. Positions 132-310 constitute a VWFA domain; it reads DLYILMDFSN…KTQDYPSVPT (179 aa). S140 and S142 together coordinate Mg(2+). Ca(2+) is bound by residues S142, D145, D146, and D177. Residues 195-200 are involved in NRG1- and IGF1-binding; sequence WPNSDP. Residues N229, D231, P233, and E234 each coordinate Ca(2+). E234 is a Mg(2+) binding site. N-linked (GlcNAc...) asparagine glycosylation occurs at N328. Residue E351 participates in Ca(2+) binding. 4 I-EGF domains span residues 459–493, 494–539, 540–576, and 577–617; these read CELQ…KTCN, CSTG…HFCE, YDNF…RSCD, and CPLS…TTCE. The short motif at 473 to 475 is the Cell attachment site element; sequence RGD. A glycan (N-linked (GlcNAc...) asparagine) is linked at N493. 11 cysteine pairs are disulfide-bonded: C494–C522, C505–C520, C514–C525, C527–C538, C545–C559, C553–C564, C566–C575, C577–C600, C584–C598, C592–C603, and C605–C616. Residue N581 is glycosylated (N-linked (GlcNAc...) asparagine). Residue N619 is glycosylated (N-linked (GlcNAc...) asparagine). 4 disulfides stabilise this stretch: C628/C673, C634/C653, C637/C650, and C682/C708. N-linked (GlcNAc...) asparagine glycosylation is present at N697. The helical transmembrane segment at 713–733 threads the bilayer; that stretch reads FWWLIPLLIFLLLLLALLLLL. The segment at 734–751 is palmitoylated on several cysteines; the sequence is CWKYCACCKACLGLLPCC. Residues 734 to 1818 are Cytoplasmic-facing; it reads CWKYCACCKA…THMDQQFFQT (1085 aa). A Phosphoserine modification is found at S773. In terms of domain architecture, Calx-beta spans 981 to 1086; the sequence is VNITIIKEQA…QVRRFQVQLS (106 aa). Positions 1005 to 1007 match the Cell attachment site motif; sequence RGD. 2 positions are modified to phosphoserine: S1071 and S1121. The tract at residues 1115 to 1137 is disordered; that stretch reads INQTLSSPPPPHGDLGAPQNPNA. Fibronectin type-III domains follow at residues 1131-1220 and 1224-1323; these read APQN…THQE and EPGR…TQPK. Residues 1402–1433 form a disordered region; the sequence is LSASSGRSDEDGSVAGGVEGEGSGWIRGATPR. A compositionally biased stretch (gly residues) spans 1415 to 1426; that stretch reads VAGGVEGEGSGW. Phosphoserine is present on residues S1451, S1454, and S1470. At T1483 the chain carries Phosphothreonine. S1490 is modified (phosphoserine). T1526 is modified (phosphothreonine). Fibronectin type-III domains lie at 1526-1621 and 1639-1735; these read TPTR…VHPQ and APGP…SQVG. S1787 carries the post-translational modification Phosphoserine.

The protein belongs to the integrin beta chain family. As to quaternary structure, heterodimer of an alpha and a beta subunit. Beta-4 associates with alpha-6. Interacts (via cytoplasmic region) with COL17A1 (via cytoplasmic region). Interacts (via cytoplasmic region) with DST isoform 3 (via N-terminus). Interacts (via cytoplasmic domain) with DST (via N-terminus). Interacts with RAC1. ITGA6:ITGB4 is found in a ternary complex with NRG1 and ERBB3. ITGA6:ITGB4 is found in a ternary complex with IGF1 and IGF1R. ITGA6:ITGB4 interacts with IGF2. Interacts with TMEM268; this interaction prevents ITGB4 degradation. In terms of processing, palmitoylated by DHHC3 at several cysteines of the membrane-proximal region, enhancing stability and cell surface expression. Palmitoylation also promotes secondary association with tertaspanins.

It localises to the cell membrane. The protein localises to the cell junction. The protein resides in the hemidesmosome. Functionally, integrin alpha-6/beta-4 is a receptor for laminin. It plays a critical structural role in the hemidesmosome of epithelial cells. Is required for the regulation of keratinocyte polarity and motility. ITGA6:ITGB4 binds to NRG1 (via EGF domain) and this binding is essential for NRG1-ERBB signaling. ITGA6:ITGB4 binds to IGF1 and this binding is essential for IGF1 signaling. ITGA6:ITGB4 binds to IGF2 and this binding is essential for IGF2 signaling. The polypeptide is Integrin beta-4 (Itgb4) (Mus musculus (Mouse)).